The following is a 593-amino-acid chain: Regulatory protein NPR1 (593 aa).

4 positions are modified to phosphoserine: S11, S15, S55, and S59. The BTB domain occupies 65–144 (SDAKLVLSDG…VYSSRVRPPP (80 aa)). Residues 147–161 (VSECADENCCHVACR) form a C2HC NPR-type zinc finger. Zn(2+) is bound by residues C150 and C155. The residue at position 156 (C156) is an S-nitrosocysteine. Residues H157 and C160 each coordinate Zn(2+). 5 ANK repeats span residues 229 to 258 (KSNV…ELGL), 265 to 295 (KHVS…NLDD), 297 to 324 (CALH…DVNH), 328 to 357 (RGYT…SASE), and 361 to 397 (EGRT…CVEI). Residues 345-348 (ILSL) carry the SIM3, required fo binding to SUMO3 and subsequent sumoylation motif. The interval 387–525 (HSLKGRLCVE…DQIMNCEDLT (139 aa)) is salicylic acid-binding core (SBC). R432 contributes to the salicylate binding site. The Nuclear localization signal signature appears at 537 to 554 (KRLQKKQRYMEIQETLKK). Residues 563–593 (LGNSSLTDSTSSTSKSTGGKRSNRKLSHRRR) are disordered. The span at 566–579 (SSLTDSTSSTSKST) shows a compositional bias: low complexity. Residues 583–593 (RSNRKLSHRRR) are compositionally biased toward basic residues.

Belongs to the plant 'ANKYRIN-BTB/POZ' family. 'NPR1-like' subfamily. Homodimer. Oligomer of dimers in an uninduced quiescent state; disulfide-linked. Forms activated (i.e. sumoylated) homodimers and monomers upon systemic acquired resistance (SAR) induction. Interacts with TGA1, TGA3, TGA4, TGA5, TGA6, TGA7 and with reduced forms of TGA1 and TGA4. Activated homodimer binds two TGA3 dimers in the presence of DNA via its ANK 2 repeat (265-295), thus forming a TGA3(2)-NPR1(2)-TGA3(2) complex in which NPR1 serves as a transcription cofactor by bridging two transcription factor complexes in an enhanceosome. Interacts with NIMIN-1 and NIMIN-3 via its C-terminal region, and with NIMIN-2 via its N-terminal region. Interacts with SUMO3 but not with SUMO1 and SUMO2; this interaction is required for phosphorylation at Ser-11 and Ser-15, and triggers activation by sumoylation and subsequent degradation. Binds to NPR3 and NPR4; these interactions are promoted by association of salicylic acid (SA) with NPR3, but disrupted by SA association with NPR4, probably due to conformational changes. Binds to CUL3A, a core component of the cullin-RING ubiquitin ligases (CRL); this interaction requires NPR3 and NPR4. Interacts with NPR2 independently of SA. Binds to WRKY70 when unmodified (i.e. not sumoylated). In terms of processing, phosphorylation at Ser-55 and Ser-59 prevents sumoylation to ensure stability and quiescence. Phosphorylated at Ser-11 and Ser-15 in the nucleus; facilitates its recruitment to a cullin3-based ubiquitin ligase leading to polyubiquitination and subsequent CUL3/CSN-mediated degradation. This phosphorylation at Ser-11 and Ser-15 requires interaction with SUMO3, and promotes in turn activation by sumoylation and subsequent degradation. Post-translationally, ubiquitinated. In terms of processing, sumoylated by SUMO3 independently of an E3 ligase to activate defense gene expression by switching from association with WRKY transcriptional repressors (e.g. WRKY70) to TGA transcriptional activators (e.g. TGA3). Sumoylation is inhibited by phosphorylation at Ser-55 and Ser-59, but seems to promote phosphorylation at Ser-11 and Ser-15. Sumoylation also triggers degradation, making immune induction transient. The Cys-82-SH group reacts with Cys-216-SH of the other subunit to form an intermolecular disulfide. This disulfide might subsequently be reduced upon systemic acquired resistance (SAR) induction. Post-translationally, S-nitrosylation at Cys-156 facilitates its oligomerization.

It is found in the cytoplasm. The protein resides in the nucleus. Its subcellular location is the nuclear body. It functions in the pathway protein modification; protein ubiquitination. Functionally, salicylic acid (SA)-binding substrate-specific adapter of an E3 ubiquitin-protein ligase complex (CUL3-RBX1-BTB) which mediates the ubiquitination and subsequent proteasomal degradation of target proteins. Transcription cofactor that represses gene expression in the absence of salicylic acid (SA), when attached to negative cis-elements (W-box) with WRKY transcription factors (e.g. WRKY70), but stimulates gene expression upon activation by SA, when sumoylated and attached to positive cis-elements (as-1) with TGA transcription factors (e.g. TGA3), thus confering immunity through a series of gene regulations ending in a significant increase in antimicrobial and defense genes expression (e.g. PR-1 and PR-2). Binds to SA with low capacity; this leads to conformational changes. Key positive regulator of the SA-dependent signaling pathway that negatively regulates jasmonic acid (JA)-dependent signaling pathway. Controls the onset of systemic acquired resistance (SAR). Upon SAR induction, a biphasic change in cellular reduction potential occurs, resulting in reduction of the cytoplasmic oligomeric form to dimeric and monomeric forms, which accumulate in the nucleus and activate gene expression. Appears to control lesion expansion by acting as an inhibitor of programmed cell death (PCD) during effector-triggered immunity (ETI) that occurs in response to incompatible interaction with avirulent pathogenic bacteria (i.e. Pseudomonas syringae ES4326/avrRpt2) ending in a hypersensitive response (HR). Phosphorylated form is target of proteasome degradation. The protein is Regulatory protein NPR1 of Arabidopsis thaliana (Mouse-ear cress).